Here is a 702-residue protein sequence, read N- to C-terminus: Polynucleotide 5'-hydroxyl-kinase NOL9 (702 aa).

Ala-2 is modified (N-acetylalanine). Residues 31–47 (RRPRRRLGSLRWCGRRR) carry the Nucleolar localization signal motif. A disordered region spans residues 69 to 101 (VSRAAAARRPNTATPSPIPSPTPASEPESEPEL). The segment covering 71 to 83 (RAAAARRPNTATP) has biased composition (low complexity). 306–313 (GSQDVGKS) provides a ligand contact to ATP. Residues 480 to 702 (FADEEKESPV…RRPKFCRKMK (223 aa)) are interaction with LAS1L. Lys-485 participates in a covalent cross-link: Glycyl lysine isopeptide (Lys-Gly) (interchain with G-Cter in SUMO2). A Phosphoserine modification is found at Ser-487. Over residues 680-689 (AREPEEAHKE) the composition is skewed to basic and acidic residues. The segment at 680–702 (AREPEEAHKEKPYRRPKFCRKMK) is disordered. Residues 690 to 702 (KPYRRPKFCRKMK) show a composition bias toward basic residues.

This sequence belongs to the Clp1 family. NOL9/GRC3 subfamily. Interacts with PELP1, WDR18 and SENP3. Interacts with LAS1L to form an ITS2 pre-rRNA endonuclease-kinase complex.

The protein resides in the nucleus. It localises to the nucleolus. The catalysed reaction is a 5'-end dephospho-2'-deoxyribonucleoside-DNA + ATP = a 5'-end 5'-phospho-2'-deoxyribonucleoside-DNA + ADP + H(+). It catalyses the reaction a 5'-end dephospho-ribonucleoside-RNA + ATP = a 5'-end 5'-phospho-ribonucleoside-RNA + ADP + H(+). Polynucleotide kinase that can phosphorylate the 5'-hydroxyl groups of single-stranded and double-stranded RNA and DNA substrates. Involved in rRNA processing and its kinase activity is required for the processing of the 32S precursor into 5.8S and 28S rRNAs, more specifically for the generation of the major 5.8S(S) form. Required for the efficient pre-rRNA processing of internal transcribed spacer 2 (ITS2). Associates with LAS1L to form an ITS2 pre-rRNA endonuclease-kinase complex and is responsible for the transport of this complex into the nucleolus. The polypeptide is Polynucleotide 5'-hydroxyl-kinase NOL9 (NOL9) (Homo sapiens (Human)).